A 61-amino-acid polypeptide reads, in one-letter code: UPF0337 protein LMOf2365_2190 (61 aa).

The disordered stretch occupies residues 1–61; sequence MSEDKGMKDK…TGDAKKKLSE (61 aa).

The protein belongs to the UPF0337 (CsbD) family.

The sequence is that of UPF0337 protein LMOf2365_2190 from Listeria monocytogenes serotype 4b (strain F2365).